The sequence spans 485 residues: Glutamyl-tRNA(Gln) amidotransferase subunit A (485 aa).

Residues lysine 78 and serine 153 each act as charge relay system in the active site. Residue serine 177 is the Acyl-ester intermediate of the active site.

The protein belongs to the amidase family. GatA subfamily. Heterotrimer of A, B and C subunits.

The catalysed reaction is L-glutamyl-tRNA(Gln) + L-glutamine + ATP + H2O = L-glutaminyl-tRNA(Gln) + L-glutamate + ADP + phosphate + H(+). In terms of biological role, allows the formation of correctly charged Gln-tRNA(Gln) through the transamidation of misacylated Glu-tRNA(Gln) in organisms which lack glutaminyl-tRNA synthetase. The reaction takes place in the presence of glutamine and ATP through an activated gamma-phospho-Glu-tRNA(Gln). The protein is Glutamyl-tRNA(Gln) amidotransferase subunit A of Bacillus cereus (strain ATCC 10987 / NRS 248).